Reading from the N-terminus, the 887-residue chain is MNSGGGLPPPSAAASPSSSSLAAAVAVVAPPGVGGVPGGAAVGVKLKYCRYYAKDKTCFYGEECQFLHEDPAAGAAPGLGLHSNSVPLALAGAPVAGFPPGAVAGGGAGPPPGPKKPDLGDPGTGAAAGGGGSSGGLDGPRLAIPGMDGGALTDTSLTDSYFSTSFIGVNGFGSPVETKYPLMQRMTNSSSSPSLLNDSAKPYSAHDPLTSPASSLFNDFGALNISQRRKPRKYRLGMLEERLVPMGSKARKAKNPIGCLADRCKSGVPINMVWWNRVTENNLQTPNPTASEFIPKGGSTSRLSNVSQSNMSAFSQVFSHPSMGSPATAGLAPGMSLSAGSSPLHSPKITPHTSPAPRRRSHTPNPASYMVPSSASTSVNNPVSQTPSSGQVIQKETVGGTTYFYTDTTPAPLTGMVFPNYHIYPPTAPHVAYMQPKANAPSFFMADELRQELINRHLITMAQIDQADMPAVPTEVDSYHSLFPLEPLPPPNRIQKSSNFGYITSCYKAVNSKDDLPYCLRRIHGFRLVNTKCMVLVDMWKKIQHSNIVTLREVFTTKAFAEPSLVFAYDFHAGGETMMSRHFNDPNADAYFTKRKWGQHEGPLPRQHAGLLPESLIWAYIVQLSSALRTIHTAGLACRVMDPTKILITGKTRLRVNCVGVFDVLTFDNSQNNNPLALMAQYQQADLISLGKVVLALACNSLAGIQRENLQKAMELVTINYSSDLKNLILYLLTDQNRMRSVNDIMPMIGARFYTQLDAAQMRNDVIEEDLAKEVQNGRLFRLLAKLGTINERPEFQKDPTWSETGDRYLLKLFRDHLFHQVTEAGAPWIDLSHIISCLNKLDAGVPEKISLISRDEKSVLVVTYSDLKRCFENTFQELIAAANGQL.

The C3H1-type zinc finger occupies 43–71 (GVKLKYCRYYAKDKTCFYGEECQFLHEDP). Disordered stretches follow at residues 102–147 (AVAG…IPGM), 284–307 (QTPNPTASEFIPKGGSTSRLSNVS), and 325–392 (SPAT…SGQV). Gly residues predominate over residues 122–138 (PGTGAAAGGGGSSGGLD). The segment at 147 to 498 (MDGGALTDTS…PPPNRIQKSS (352 aa)) is necessary and sufficient for interaction with PABPC1 but not needed for interaction with PAN2. The PABPC-interacting motif-2 (PAM-2) signature appears at 284–299 (QTPNPTASEFIPKGGS). A compositionally biased stretch (polar residues) spans 298-307 (GSTSRLSNVS). Phosphoserine is present on residues Ser-354 and Ser-361. A compositionally biased stretch (polar residues) spans 363-392 (TPNPASYMVPSSASTSVNNPVSQTPSSGQV). Positions 463–750 (QIDQADMPAV…SVNDIMPMIG (288 aa)) are pseudokinase domain. ATP contacts are provided by residues Arg-521, 570–577 (DFHAGGET), and 644–645 (TK). A coiled-coil region spans residues 751–789 (ARFYTQLDAAQMRNDVIEEDLAKEVQNGRLFRLLAKLGT). Positions 790 to 887 (INERPEFQKD…ELIAAANGQL (98 aa)) are knob domain.

The protein belongs to the protein kinase superfamily. PAN3 family. As to quaternary structure, homodimer. Forms a heterotrimer with a catalytic subunit PAN2 to form the poly(A)-nuclease (PAN) deadenylation complex. Interacts (via PAM-2 motif) with poly(A)-binding protein PABPC1 (via PABC domain), conferring substrate specificity of the enzyme complex. Interacts with the GW182 family proteins TNRC6A, TNRC6B and TNRC6. Interacts with YTHDF3. Interacts with PAN2. Interacts (via N-terminus) with PABPC1 at lower efficiency than isoform 3. In terms of assembly, interacts with PAN2. Interacts (via N-terminus) with PABPC1 at higher efficiency than isoform 1.

It localises to the cytoplasm. The protein resides in the P-body. Its subcellular location is the nucleus. Its function is as follows. Regulatory subunit of the poly(A)-nuclease (PAN) deadenylation complex, one of two cytoplasmic mRNA deadenylases involved in general and miRNA-mediated mRNA turnover. PAN specifically shortens poly(A) tails of RNA and the activity is stimulated by poly(A)-binding protein (PABP). PAN deadenylation is followed by rapid degradation of the shortened mRNA tails by the CCR4-NOT complex. Deadenylated mRNAs are then degraded by two alternative mechanisms, namely exosome-mediated 3'-5' exonucleolytic degradation, or deadenylation-dependent mRNA decapping and subsequent 5'-3' exonucleolytic degradation by XRN1. PAN3 acts as a regulator for PAN activity, recruiting the catalytic subunit PAN2 to mRNA via its interaction with RNA and PABP, and to miRNA targets via its interaction with GW182 family proteins. In terms of biological role, decreases PAN2-mediated deadenylation, possibly by preventing progression into the second CCR4-NOT mediated stage of biphasic deadenylation. Has a significant effect on mRNA stability, generally stabilizing a subset of the transcriptome. Stabilizes mRNAs degraded by the AU-rich element (ARE)-mediated mRNA decay pathway but promotes degradation of mRNAs by the microRNA-mediated pathway. Its activity influences mRNP remodeling, specifically reducing formation of a subset of P-bodies containing GW220, an isoform of TNRC6A. Enhances PAN2 deadenylase activity and has an extensive effect on mRNA stability, generally enhancing mRNA decay across the transcriptome by multiple pathways, including the AU-rich element (ARE)-mediated pathway, microRNA-mediated pathway and the nonsense-mediated pathway (NMD). Its activity is required for efficient P-body formation. May be involved in regulating mRNAs of genes involved in cell cycle progression and cell proliferation. This chain is PAN2-PAN3 deadenylation complex subunit PAN3, found in Homo sapiens (Human).